A 1000-amino-acid polypeptide reads, in one-letter code: Lysine-specific histone demethylase 1 (1000 aa).

Residues 104–123 (RRPAGRRGRPALNTSNSLER) are disordered. Positions 107–137 (AGRRGRPALNTSNSLERNGTRYVSAEAPISV) form a coiled coil. In terms of domain architecture, SWIRM spans 153–249 (CYESAIASNL…YGCIYIISSL (97 aa)). FAD-binding positions include 260 to 302 (VAII…IYEA), Glu-301, and 328 to 329 (LA). Residues 279 to 950 (LFAQYEQDFL…RCESQPIPED (672 aa)) are demethylase activity. The stretch at 434–529 (IGWYISIEAF…ADMLNSLAST (96 aa)) forms a coiled coil. Residues 780–800 (TYGTKRNAQQALGKEGERENK) are disordered. Residues 841-921 (SRPSANPYLL…NYSTRLEEYQ (81 aa)) constitute a DNA-binding region (HMG box). 908–909 (AR) lines the FAD pocket. Residues 959 to 972 (EQEDEHLHPEKEGM) show a composition bias toward basic and acidic residues. The segment at 959-1000 (EQEDEHLHPEKEGMSVENSDDDYHDDLDYEDSISEVFPDNFS) is disordered. Residues 976 to 991 (NSDDDYHDDLDYEDSI) are compositionally biased toward acidic residues.

This sequence belongs to the flavin monoamine oxidase family. In terms of assembly, component of the SWM histone demethylase complex composed of at least lsd1, lsd2, phf1 and phf2. Interacts directly with lsd2. Requires FAD as cofactor.

Its subcellular location is the nucleus. Its function is as follows. Catalytic component of the SWM histone demethylase complex that specifically demethylates H3K9me2, a specific tag for epigenetic transcriptional activation, thereby acting as a corepressor. Acts by oxidizing the substrate by FAD to generate the corresponding imine that is subsequently hydrolyzed. Has a role in regulating heterochromatin propagation and euchromatic transcription. Also has a gene activating role. In Schizosaccharomyces pombe (strain 972 / ATCC 24843) (Fission yeast), this protein is Lysine-specific histone demethylase 1 (lsd1).